Consider the following 102-residue polypeptide: Large ribosomal subunit protein eL31 (102 aa).

This sequence belongs to the eukaryotic ribosomal protein eL31 family.

The polypeptide is Large ribosomal subunit protein eL31 (Staphylothermus marinus (strain ATCC 43588 / DSM 3639 / JCM 9404 / F1)).